Here is an 88-residue protein sequence, read N- to C-terminus: Small ribosomal subunit protein bS20 (88 aa).

Belongs to the bacterial ribosomal protein bS20 family.

In terms of biological role, binds directly to 16S ribosomal RNA. In Desulforudis audaxviator (strain MP104C), this protein is Small ribosomal subunit protein bS20.